Reading from the N-terminus, the 689-residue chain is Glycine--tRNA ligase beta subunit (689 aa).

Belongs to the class-II aminoacyl-tRNA synthetase family. As to quaternary structure, tetramer of two alpha and two beta subunits.

The protein localises to the cytoplasm. It catalyses the reaction tRNA(Gly) + glycine + ATP = glycyl-tRNA(Gly) + AMP + diphosphate. The chain is Glycine--tRNA ligase beta subunit from Shigella boydii serotype 18 (strain CDC 3083-94 / BS512).